A 651-amino-acid polypeptide reads, in one-letter code: Histone-lysine N-methyltransferase family member SUVH2 (651 aa).

The segment at 1–28 is disordered; the sequence is MSTLLPFPDLNLMPDSQSSTAGTTAGDT. Low complexity predominate over residues 15-28; sequence DSQSSTAGTTAGDT. Positions 202–358 constitute a YDG domain; the sequence is DKHIVGPVTG…KFRLVRIEGQ (157 aa). In terms of domain architecture, Pre-SET spans 434–492; the sequence is TGCECKLSCTDDCLCARKNGGEFAYDDNGHLLKGKHVVFECGEFCTCGPSCKSRVTQKG. Zn(2+) is bound by residues cysteine 436, cysteine 438, cysteine 442, cysteine 446, cysteine 448, cysteine 474, cysteine 478, cysteine 480, and cysteine 484. Residues 495–638 form the SET domain; that stretch reads NRLEVFRSKE…PLAELSLDYG (144 aa).

This sequence belongs to the class V-like SAM-binding methyltransferase superfamily. Histone-lysine methyltransferase family. Suvar3-9 subfamily. As to quaternary structure, self-interacts. Interacts with DNA-directed RNA polymerase V subunit NRPE1 and with DRD1 and DMS3. Binds to MORC1/CRT1. As to expression, expressed at low levels in leaves stems and flowers.

It is found in the nucleus. It localises to the chromosome. The protein localises to the centromere. Histone methyltransferase family member that plays a central role in gene silencing. Together with MORC6 and SUVH9, regulates the silencing of some transposable elements (TEs). According to PubMed:15775980, it is required for normal methylation of 'Lys-9' and 'Lys-27' of histone H3, 'Lys-20' of H4, and cytosine, but PubMed:19043555 see no significant effect on histone methylation when the gene is mutated. According to PubMed:19043555, the protein does not bind S-adenosyl-L-methionine and lacks methyltransferase activity. Instead, it may function downstream of DRM2 in RNA-directed DNA methylation, binding to methylated DNA and recruiting DNA-directed RNA polymerase V to chromatin. This Arabidopsis thaliana (Mouse-ear cress) protein is Histone-lysine N-methyltransferase family member SUVH2 (SUVH2).